The primary structure comprises 84 residues: Beta-cardiotoxin CTX9 (84 aa).

The signal sequence occupies residues 1–21 (MKTLLLTLVVVTIVCLDLGYT). Intrachain disulfides connect Cys24–Cys43, Cys36–Cys61, Cys65–Cys76, and Cys77–Cys82.

This sequence belongs to the three-finger toxin family. Short-chain subfamily. Aminergic toxin sub-subfamily. As to expression, expressed by the venom gland.

Its subcellular location is the secreted. Acts as a beta-blocker by binding to beta-1 and beta-2 adrenergic receptors (ADRB1 and ADRB2). It dose-dependently decreases the heart rate (bradycardia), whereas conventional cardiotoxins increases it. At 100 mg/kg, intraperitoneal injection into mice provokes labored breathing, impaired locomotion, lack of response to external stimuli, and death (after 30 minutes). The sequence is that of Beta-cardiotoxin CTX9 from Ophiophagus hannah (King cobra).